The following is a 722-amino-acid chain: Zinc finger protein 600 (722 aa).

The C2H2-type 1; degenerate zinc finger occupies 162–184; the sequence is FQCNESGKAFNCSSLLRKHQIPH. 9 C2H2-type zinc fingers span residues 190-212, 218-240, 246-268, 274-296, 302-324, 330-352, 358-380, 386-408, and 414-436; these read YKCD…CRCH, YKCN…RRLH, HKCN…KAIH, YKCN…RRIH, YKCE…KRIH, YKCK…KRIH, YKCN…HRLH, YKCK…TRIH, and YKCN…KSIH. The C2H2-type 11; degenerate zinc-finger motif lies at 442–464; it reads YKYEECEKVFSCGSTLETHKIIH. 9 consecutive C2H2-type zinc fingers follow at residues 470–492, 498–520, 526–548, 554–576, 582–604, 610–632, 638–660, 666–688, and 694–716; these read YKCK…TRIH, YKCN…RRVH, YKCN…RRLH, YKCT…TRIH, YKCN…HRIH, YKCE…RRIH, YKCK…TGLH, and YKCN…QAVH.

The protein belongs to the krueppel C2H2-type zinc-finger protein family.

The protein localises to the nucleus. In terms of biological role, may be involved in transcriptional regulation. This is Zinc finger protein 600 (ZNF600) from Homo sapiens (Human).